The primary structure comprises 396 residues: 1-deoxy-D-xylulose 5-phosphate reductoisomerase (396 aa).

The NADPH site is built by Thr13, Gly14, Ser15, Ile16, and Asn127. Position 128 (Lys128) interacts with 1-deoxy-D-xylulose 5-phosphate. Glu129 is a binding site for NADPH. Asp153 provides a ligand contact to Mn(2+). Ser154, Glu155, Ser184, and His207 together coordinate 1-deoxy-D-xylulose 5-phosphate. Glu155 is a binding site for Mn(2+). An NADPH-binding site is contributed by Gly213. 1-deoxy-D-xylulose 5-phosphate-binding residues include Ser220, Asn225, Lys226, and Glu229. Glu229 serves as a coordination point for Mn(2+).

The protein belongs to the DXR family. It depends on Mg(2+) as a cofactor. The cofactor is Mn(2+).

It catalyses the reaction 2-C-methyl-D-erythritol 4-phosphate + NADP(+) = 1-deoxy-D-xylulose 5-phosphate + NADPH + H(+). It participates in isoprenoid biosynthesis; isopentenyl diphosphate biosynthesis via DXP pathway; isopentenyl diphosphate from 1-deoxy-D-xylulose 5-phosphate: step 1/6. In terms of biological role, catalyzes the NADPH-dependent rearrangement and reduction of 1-deoxy-D-xylulose-5-phosphate (DXP) to 2-C-methyl-D-erythritol 4-phosphate (MEP). The protein is 1-deoxy-D-xylulose 5-phosphate reductoisomerase of Pseudomonas putida (strain W619).